The following is an 876-amino-acid chain: Leucine--tRNA ligase (876 aa).

The tract at residues 1 to 20 (MATERYNPRDAEPRWQQKWN) is disordered. Positions 43 to 53 (PYPSGRIHMGH) match the 'HIGH' region motif. The 'KMSKS' region motif lies at 632-636 (KMSKS). Residue K635 coordinates ATP.

It belongs to the class-I aminoacyl-tRNA synthetase family.

It is found in the cytoplasm. It carries out the reaction tRNA(Leu) + L-leucine + ATP = L-leucyl-tRNA(Leu) + AMP + diphosphate. The protein is Leucine--tRNA ligase of Rhizobium leguminosarum bv. trifolii (strain WSM2304).